Consider the following 147-residue polypeptide: Large ribosomal subunit protein bL9 (147 aa).

It belongs to the bacterial ribosomal protein bL9 family.

Functionally, binds to the 23S rRNA. The sequence is that of Large ribosomal subunit protein bL9 from Trichlorobacter lovleyi (strain ATCC BAA-1151 / DSM 17278 / SZ) (Geobacter lovleyi).